Here is a 373-residue protein sequence, read N- to C-terminus: Probable peptidoglycan glycosyltransferase FtsW (373 aa).

The next 9 helical transmembrane spans lie at Leu-15–Ala-35, Phe-48–Ala-68, Ala-80–Gly-100, Phe-144–Leu-164, Asp-168–Thr-188, Tyr-192–Asp-212, Leu-278–Val-298, Phe-311–Val-331, and Leu-342–Leu-362.

It belongs to the SEDS family. FtsW subfamily.

It localises to the cell inner membrane. It carries out the reaction [GlcNAc-(1-&gt;4)-Mur2Ac(oyl-L-Ala-gamma-D-Glu-L-Lys-D-Ala-D-Ala)](n)-di-trans,octa-cis-undecaprenyl diphosphate + beta-D-GlcNAc-(1-&gt;4)-Mur2Ac(oyl-L-Ala-gamma-D-Glu-L-Lys-D-Ala-D-Ala)-di-trans,octa-cis-undecaprenyl diphosphate = [GlcNAc-(1-&gt;4)-Mur2Ac(oyl-L-Ala-gamma-D-Glu-L-Lys-D-Ala-D-Ala)](n+1)-di-trans,octa-cis-undecaprenyl diphosphate + di-trans,octa-cis-undecaprenyl diphosphate + H(+). Its pathway is cell wall biogenesis; peptidoglycan biosynthesis. Peptidoglycan polymerase that is essential for cell division. The chain is Probable peptidoglycan glycosyltransferase FtsW from Geobacter sulfurreducens (strain DL-1 / KN400).